A 163-amino-acid chain; its full sequence is Lipoprotein signal peptidase (163 aa).

3 consecutive transmembrane segments (helical) span residues 11–31 (ILIA…IATT), 63–83 (KMTF…YFFI), and 88–108 (YNLF…GNFI). Catalysis depends on residues Asp118 and Asp136. A helical membrane pass occupies residues 131-151 (IFNIADSSLTIGVILIIIALL).

It belongs to the peptidase A8 family.

It localises to the cell membrane. The catalysed reaction is Release of signal peptides from bacterial membrane prolipoproteins. Hydrolyzes -Xaa-Yaa-Zaa-|-(S,diacylglyceryl)Cys-, in which Xaa is hydrophobic (preferably Leu), and Yaa (Ala or Ser) and Zaa (Gly or Ala) have small, neutral side chains.. Its pathway is protein modification; lipoprotein biosynthesis (signal peptide cleavage). Its function is as follows. This protein specifically catalyzes the removal of signal peptides from prolipoproteins. The chain is Lipoprotein signal peptidase from Staphylococcus aureus (strain Mu3 / ATCC 700698).